The primary structure comprises 98 residues: Lipolysis-activating peptide 1-beta chain (98 aa).

Positions 1–22 (MANVQVIFVAYIAVIAFSMVYG) are cleaved as a signal peptide. The LCN-type CS-alpha/beta domain maps to 23-91 (DDYKPFGEHN…FLKAMEKQCP (69 aa)). Disulfide bonds link Cys-37–Cys-60, Cys-45–Cys-70, and Cys-49–Cys-72.

This sequence belongs to the long (3 C-C) scorpion toxin superfamily. As to quaternary structure, homodimer; disulfide-linked or monomer (edited version) or heterodimer of an alpha chain (AC B8XH01) and this beta chain (non-edited version). As to expression, expressed by the venom gland.

Its subcellular location is the secreted. The homodimer inhibits HMG-CoA reductase (HMGCR) (32% of inhibition produced by 0.6 uM), a glycoprotein involved in the control of cholesterol biosynthesis. The inhibitory effects of bumarsin are seen at much lower concentrations (0.6 uM) than that for statins such as atorvastatin (5 mM) and simvastatin (10 uM). In addition to inhibition of HMG-CoA reductase, this protein lowers cholesterol levels by inducing steroid hormone synthesis via StAR, and by increasing reverse cholesterol transport mediated by the induction of ABCA1 and APOA1. In terms of biological role, the heterodimer non-edited LVP1 induces lipolysis in rat adipocytes. Induction of lipolysis by LVP1 appears to be mediated through the beta-2 adrenergic receptor pathway (ADRB2). Its function is as follows. The monomer edited version, similar to alpha-toxins, may modulate voltage-gated sodium channels (Nav) and may block voltage-gated potassium channels (Kv). The protein is Lipolysis-activating peptide 1-beta chain of Buthus israelis (Israeli scorpion).